The sequence spans 357 residues: D-alanine--D-alanine ligase (357 aa).

One can recognise an ATP-grasp domain in the interval 134–339 (KQLFEHRGLP…YPDLIAKLID (206 aa)). An ATP-binding site is contributed by 167–222 (NDKLTYPVFVKPANLGSSVGISKCNNEEELKSGITEAFQFDRKLVIEQGINAREIE). Asp-293, Glu-306, and Asn-308 together coordinate Mg(2+).

This sequence belongs to the D-alanine--D-alanine ligase family. Mg(2+) serves as cofactor. Mn(2+) is required as a cofactor.

It localises to the cytoplasm. It carries out the reaction 2 D-alanine + ATP = D-alanyl-D-alanine + ADP + phosphate + H(+). The protein operates within cell wall biogenesis; peptidoglycan biosynthesis. Its function is as follows. Cell wall formation. This chain is D-alanine--D-alanine ligase, found in Staphylococcus epidermidis (strain ATCC 12228 / FDA PCI 1200).